Consider the following 227-residue polypeptide: 2,3-bisphosphoglycerate-dependent phosphoglycerate mutase (227 aa).

Substrate is bound by residues 7-14, 20-21, Arg59, 86-89, Lys97, 113-114, and 182-183; these read RHGQSEWN, TG, ERHY, RR, and GN. His8 acts as the Tele-phosphohistidine intermediate in catalysis. The active-site Proton donor/acceptor is the Glu86.

The protein belongs to the phosphoglycerate mutase family. BPG-dependent PGAM subfamily. In terms of assembly, homodimer.

The enzyme catalyses (2R)-2-phosphoglycerate = (2R)-3-phosphoglycerate. The protein operates within carbohydrate degradation; glycolysis; pyruvate from D-glyceraldehyde 3-phosphate: step 3/5. In terms of biological role, catalyzes the interconversion of 2-phosphoglycerate and 3-phosphoglycerate. The protein is 2,3-bisphosphoglycerate-dependent phosphoglycerate mutase of Neisseria meningitidis serogroup C / serotype 2a (strain ATCC 700532 / DSM 15464 / FAM18).